Consider the following 1031-residue polypeptide: Kinesin heavy chain (1031 aa).

One can recognise a Kinesin motor domain in the interval 8–325 (NIKVVCRVRP…LMFGQRAKTI (318 aa)). Position 84 to 91 (84 to 91 (GQTSSGKT)) interacts with ATP. Residues 393 to 857 (PKQMTVHVSE…RDNADLRCEL (465 aa)) adopt a coiled-coil conformation. Basic and acidic residues predominate over residues 673 to 686 (TDQEDKKREEEDKM). 2 disordered regions span residues 673–692 (TDQEDKKREEEDKMQSATEM) and 906–1031 (RNFA…EQGS). Residues 858 to 1031 (PKLERRLRAT…PLTTSGEQGS (174 aa)) form a globular region. Over residues 932–949 (GSTGIRGGGYSGIRGGGS) the composition is skewed to gly residues. 2 stretches are compositionally biased toward polar residues: residues 964–977 (SHNNSFEKSLNPND) and 1014–1031 (RNNTPGKAPLTTSGEQGS).

It belongs to the TRAFAC class myosin-kinesin ATPase superfamily. Kinesin family. Kinesin subfamily. As to quaternary structure, oligomer composed of two heavy chains and two light chains.

It localises to the cytoplasm. Its subcellular location is the cytoskeleton. Kinesin is a microtubule-associated force-producing protein that may play a role in organelle transport. This is Kinesin heavy chain from Strongylocentrotus purpuratus (Purple sea urchin).